A 418-amino-acid polypeptide reads, in one-letter code: IQ domain-containing protein C (418 aa).

Residues 6–35 (FLRKVSTLQAGFRGFLVRRQFQSLRAEYEA) form the IQ domain. Disordered regions lie at residues 101–142 (QKKT…SVSK), 230–264 (HHAE…KGRE), 280–299 (SQAG…QPFK), 327–355 (AETQ…AGPC), and 376–418 (GSLD…LQWR). Composition is skewed to polar residues over residues 129 to 142 (KASQ…SVSK) and 249 to 259 (SVTSAGKTTAG). The stretch at 141–176 (SKMENADLGLSQSQQELQEQRNHLAMELLWLQQAIN) forms a coiled coil. The segment covering 390–404 (PPSAGSSGHGNTSEL) has biased composition (polar residues).

This is IQ domain-containing protein C (Iqcc) from Mus musculus (Mouse).